The following is a 342-amino-acid chain: tRNA(Ile)-lysidine synthase (342 aa).

S31 to S36 is a binding site for ATP.

Belongs to the tRNA(Ile)-lysidine synthase family.

It localises to the cytoplasm. The enzyme catalyses cytidine(34) in tRNA(Ile2) + L-lysine + ATP = lysidine(34) in tRNA(Ile2) + AMP + diphosphate + H(+). Its function is as follows. Ligates lysine onto the cytidine present at position 34 of the AUA codon-specific tRNA(Ile) that contains the anticodon CAU, in an ATP-dependent manner. Cytidine is converted to lysidine, thus changing the amino acid specificity of the tRNA from methionine to isoleucine. This Nostoc sp. (strain PCC 7120 / SAG 25.82 / UTEX 2576) protein is tRNA(Ile)-lysidine synthase.